The primary structure comprises 353 residues: Uroporphyrinogen decarboxylase (353 aa).

Substrate-binding positions include 28-32 (RQAGR), Asp-78, Tyr-155, Ser-210, and His-325.

It belongs to the uroporphyrinogen decarboxylase family. In terms of assembly, homodimer.

The protein resides in the cytoplasm. It carries out the reaction uroporphyrinogen III + 4 H(+) = coproporphyrinogen III + 4 CO2. It functions in the pathway porphyrin-containing compound metabolism; protoporphyrin-IX biosynthesis; coproporphyrinogen-III from 5-aminolevulinate: step 4/4. Functionally, catalyzes the decarboxylation of four acetate groups of uroporphyrinogen-III to yield coproporphyrinogen-III. The sequence is that of Uroporphyrinogen decarboxylase from Nostoc punctiforme (strain ATCC 29133 / PCC 73102).